We begin with the raw amino-acid sequence, 156 residues long: Small ribosomal subunit protein uS7 (156 aa).

This sequence belongs to the universal ribosomal protein uS7 family. As to quaternary structure, part of the 30S ribosomal subunit. Contacts proteins S9 and S11.

Its function is as follows. One of the primary rRNA binding proteins, it binds directly to 16S rRNA where it nucleates assembly of the head domain of the 30S subunit. Is located at the subunit interface close to the decoding center, probably blocks exit of the E-site tRNA. The chain is Small ribosomal subunit protein uS7 from Lactobacillus delbrueckii subsp. bulgaricus (strain ATCC 11842 / DSM 20081 / BCRC 10696 / JCM 1002 / NBRC 13953 / NCIMB 11778 / NCTC 12712 / WDCM 00102 / Lb 14).